Consider the following 154-residue polypeptide: MATFSQKPAEVVKKWVLIDAEGLVLGRLATIVANRLRGKHKATFTPHVDDGDNVVIINADKVVLTGKKYTDKVYYWHTGHPGGIKERTARQILEGRFPERVVEKAIERMIPRGPLGRRQMKNLRVYAGPNHQQEAQQPEVLDVAALNRKNKGNA.

The protein belongs to the universal ribosomal protein uL13 family. Part of the 50S ribosomal subunit.

Functionally, this protein is one of the early assembly proteins of the 50S ribosomal subunit, although it is not seen to bind rRNA by itself. It is important during the early stages of 50S assembly. This Brucella anthropi (strain ATCC 49188 / DSM 6882 / CCUG 24695 / JCM 21032 / LMG 3331 / NBRC 15819 / NCTC 12168 / Alc 37) (Ochrobactrum anthropi) protein is Large ribosomal subunit protein uL13.